We begin with the raw amino-acid sequence, 89 residues long: Large ribosomal subunit protein eL31 (89 aa).

The protein belongs to the eukaryotic ribosomal protein eL31 family.

The polypeptide is Large ribosomal subunit protein eL31 (rpl31e) (Thermoplasma acidophilum (strain ATCC 25905 / DSM 1728 / JCM 9062 / NBRC 15155 / AMRC-C165)).